Reading from the N-terminus, the 102-residue chain is Transcription factor UPBEAT1 (102 aa).

A bHLH domain is found at 32 to 82 (IRPRKSVEASRRPCRAIHRRVKTLKELVPNTKTSEGLDGLFRQTADYILAL).

Homodimer. Expressed in the root vascular tissue and in root hairs and lateral root caps. Detected at the protein level in all cell files in the elongation zone.

It localises to the nucleus. Transcription factor that modulates the balance between cellular proliferation and differentiation in root growth. Does not act through cytokinin and auxin signaling, but by repressing peroxidase expression in the elongation zone. The polypeptide is Transcription factor UPBEAT1 (UPB1) (Arabidopsis thaliana (Mouse-ear cress)).